The primary structure comprises 423 residues: AP-1 complex subunit mu-1 (423 aa).

Residue serine 2 is modified to N-acetylserine. Threonine 152, threonine 154, and threonine 223 each carry phosphothreonine. The MHD domain maps to lysine 168–arginine 421.

Belongs to the adaptor complexes medium subunit family. In terms of assembly, adaptor protein complex 1 (AP-1) is a heterotetramer composed of two large adaptins (gamma-type subunit AP1G1 and beta-type subunit AP1B1), a medium adaptin (mu-type subunit AP1M1 or AP1M2) and a small adaptin (sigma-type subunit AP1S1 or AP1S2 or AP1S3). Interacts with MARCHF11. Post-translationally, phosphorylation of membrane-bound AP1M1/AP1M2 increases its affinity for sorting signals.

Its subcellular location is the golgi apparatus. The protein localises to the cytoplasmic vesicle. The protein resides in the clathrin-coated vesicle membrane. Subunit of clathrin-associated adaptor protein complex 1 that plays a role in protein sorting in the trans-Golgi network (TGN) and endosomes. The AP complexes mediate the recruitment of clathrin to membranes and the recognition of sorting signals within the cytosolic tails of transmembrane cargo molecules. The sequence is that of AP-1 complex subunit mu-1 (Ap1m1) from Mus musculus (Mouse).